The following is a 181-amino-acid chain: MKTPEYLAPLREELAAALKQADNAWSFDIFKHTPKLESFTKECLRVFTPSGKKPLQLRSTGRTLSPGTKFSLPAQQAHLDPDNYPNPNIFDGYRFCDPQSGACDIRGTITPSAKWLIFGIGTSACPARLLATRISQTLFFKVLRKYDLRLKLDNGQPEVVYAATNMFVNFNTQMYVKSASI.

Residue Cys-125 coordinates heme.

This sequence belongs to the cytochrome P450 family. The cofactor is heme.

It functions in the pathway alkaloid biosynthesis. It participates in secondary metabolite biosynthesis. Its function is as follows. Cytochrome P450 monooxygenase; part of the gene cluster that mediates the biosynthesis of the dimeric diketopiperazine alkaloid ditryptophenaline. The nonribosomal peptide synthase dtpA accepts L-tryptophan and L-phenylalanine as its substrates and forms the phenylalanyl-tryptophanyl cyclic dipeptide product cyclophenylalanyltryptophenyl. The N-methyltransferase dtpB is responsible for the N-methylation of cyclophenylalanyltryptophenyl to yield cyclo-N-methylphenylalanyltryptophenyl. The cytochrome P450 monooxygenase is responsible not only for pyrroloindole ring formation but also for concurrent dimerization of N-methylphenylalanyltryptophanyl diketopiperazine monomers into a homodimeric product. The chain is Cytochrome P450 monooxygenase dtpC from Aspergillus flavus (strain ATCC 200026 / FGSC A1120 / IAM 13836 / NRRL 3357 / JCM 12722 / SRRC 167).